Reading from the N-terminus, the 189-residue chain is Peptidyl-tRNA hydrolase (189 aa).

Tyr-14 contacts tRNA. His-19 (proton acceptor) is an active-site residue. TRNA-binding residues include Tyr-64, Asn-66, and Asn-112.

Belongs to the PTH family. As to quaternary structure, monomer.

The protein resides in the cytoplasm. It carries out the reaction an N-acyl-L-alpha-aminoacyl-tRNA + H2O = an N-acyl-L-amino acid + a tRNA + H(+). Hydrolyzes ribosome-free peptidyl-tRNAs (with 1 or more amino acids incorporated), which drop off the ribosome during protein synthesis, or as a result of ribosome stalling. In terms of biological role, catalyzes the release of premature peptidyl moieties from peptidyl-tRNA molecules trapped in stalled 50S ribosomal subunits, and thus maintains levels of free tRNAs and 50S ribosomes. In Brevibacillus brevis (strain 47 / JCM 6285 / NBRC 100599), this protein is Peptidyl-tRNA hydrolase.